A 174-amino-acid chain; its full sequence is RNA pyrophosphohydrolase (174 aa).

Residues 6 to 145 (GYRPNVGMII…KRRVYWQALQ (140 aa)) enclose the Nudix hydrolase domain. A Nudix box motif is present at residues 38–59 (GGIDYAETPEQAMFRELEEEVG).

Belongs to the Nudix hydrolase family. RppH subfamily. Requires a divalent metal cation as cofactor.

Accelerates the degradation of transcripts by removing pyrophosphate from the 5'-end of triphosphorylated RNA, leading to a more labile monophosphorylated state that can stimulate subsequent ribonuclease cleavage. This is RNA pyrophosphohydrolase from Acidithiobacillus ferrooxidans (strain ATCC 53993 / BNL-5-31) (Leptospirillum ferrooxidans (ATCC 53993)).